The following is a 115-amino-acid chain: NADH-ubiquinone oxidoreductase chain 3 (115 aa).

Helical transmembrane passes span F3–W23, F55–L75, and L84–Y104.

Belongs to the complex I subunit 3 family. As to quaternary structure, core subunit of respiratory chain NADH dehydrogenase (Complex I) which is composed of 45 different subunits. Interacts with TMEM186. Interacts with TMEM242.

The protein localises to the mitochondrion inner membrane. It catalyses the reaction a ubiquinone + NADH + 5 H(+)(in) = a ubiquinol + NAD(+) + 4 H(+)(out). In terms of biological role, core subunit of the mitochondrial membrane respiratory chain NADH dehydrogenase (Complex I) which catalyzes electron transfer from NADH through the respiratory chain, using ubiquinone as an electron acceptor. Essential for the catalytic activity of complex I. This Homo sapiens (Human) protein is NADH-ubiquinone oxidoreductase chain 3.